The chain runs to 966 residues: RNA polymerase-associated protein RapA (966 aa).

Residues 163–337 enclose the Helicase ATP-binding domain; that stretch reads EVGQRLHPRV…FARLKLLDAD (175 aa). ATP is bound at residue 176–183; the sequence is DEVGLGKT. The DEAH box motif lies at 283-286; the sequence is DEAH. Residues 488–642 form the Helicase C-terminal domain; it reads RVEWLITFLK…ICPMGMALFE (155 aa).

It belongs to the SNF2/RAD54 helicase family. RapA subfamily. As to quaternary structure, interacts with the RNAP. Has a higher affinity for the core RNAP than for the holoenzyme. Its ATPase activity is stimulated by binding to RNAP.

In terms of biological role, transcription regulator that activates transcription by stimulating RNA polymerase (RNAP) recycling in case of stress conditions such as supercoiled DNA or high salt concentrations. Probably acts by releasing the RNAP, when it is trapped or immobilized on tightly supercoiled DNA. Does not activate transcription on linear DNA. Probably not involved in DNA repair. The protein is RNA polymerase-associated protein RapA of Actinobacillus succinogenes (strain ATCC 55618 / DSM 22257 / CCUG 43843 / 130Z).